The primary structure comprises 426 residues: Serine--tRNA ligase (426 aa).

Residue 230–232 participates in L-serine binding; sequence TAE. 261–263 lines the ATP pocket; the sequence is RSE. Glu-284 is a binding site for L-serine. Position 348–351 (348–351) interacts with ATP; it reads EISS. Ser-384 lines the L-serine pocket.

This sequence belongs to the class-II aminoacyl-tRNA synthetase family. Type-1 seryl-tRNA synthetase subfamily. As to quaternary structure, homodimer. The tRNA molecule binds across the dimer.

It is found in the cytoplasm. It carries out the reaction tRNA(Ser) + L-serine + ATP = L-seryl-tRNA(Ser) + AMP + diphosphate + H(+). It catalyses the reaction tRNA(Sec) + L-serine + ATP = L-seryl-tRNA(Sec) + AMP + diphosphate + H(+). It functions in the pathway aminoacyl-tRNA biosynthesis; selenocysteinyl-tRNA(Sec) biosynthesis; L-seryl-tRNA(Sec) from L-serine and tRNA(Sec): step 1/1. In terms of biological role, catalyzes the attachment of serine to tRNA(Ser). Is also able to aminoacylate tRNA(Sec) with serine, to form the misacylated tRNA L-seryl-tRNA(Sec), which will be further converted into selenocysteinyl-tRNA(Sec). The chain is Serine--tRNA ligase from Phenylobacterium zucineum (strain HLK1).